An 863-amino-acid chain; its full sequence is DNA mismatch repair protein MutS (863 aa).

617-624 provides a ligand contact to ATP; it reads GPNMGGKS.

This sequence belongs to the DNA mismatch repair MutS family.

In terms of biological role, this protein is involved in the repair of mismatches in DNA. It is possible that it carries out the mismatch recognition step. This protein has a weak ATPase activity. This is DNA mismatch repair protein MutS from Pseudomonas fluorescens (strain SBW25).